A 212-amino-acid polypeptide reads, in one-letter code: ATP-dependent dethiobiotin synthetase BioD (212 aa).

Residue 13–18 participates in ATP binding; sequence GIGKTV. Thr-17 is a binding site for Mg(2+). Lys-33 is a catalytic residue. Ser-37 contacts substrate. Mg(2+) is bound at residue Glu-100. ATP contacts are provided by residues 100-103 and 184-186; these read EGAG and PRL.

Belongs to the dethiobiotin synthetase family. In terms of assembly, homodimer. It depends on Mg(2+) as a cofactor.

The protein localises to the cytoplasm. The enzyme catalyses (7R,8S)-7,8-diammoniononanoate + CO2 + ATP = (4R,5S)-dethiobiotin + ADP + phosphate + 3 H(+). It participates in cofactor biosynthesis; biotin biosynthesis; biotin from 7,8-diaminononanoate: step 1/2. Functionally, catalyzes a mechanistically unusual reaction, the ATP-dependent insertion of CO2 between the N7 and N8 nitrogen atoms of 7,8-diaminopelargonic acid (DAPA, also called 7,8-diammoniononanoate) to form a ureido ring. The sequence is that of ATP-dependent dethiobiotin synthetase BioD from Rhodopseudomonas palustris (strain ATCC BAA-98 / CGA009).